An 823-amino-acid polypeptide reads, in one-letter code: Molybdenum cofactor sulfurase (823 aa).

Lys228 is subject to N6-(pyridoxal phosphate)lysine. Cys392 is a catalytic residue. Positions 628-667 (SSTRLAEPRRGLGSRKSPLRPAMPGAFPQDTPTPEAERNP) are disordered. Positions 644–819 (SPLRPAMPGA…VMVGDVVTPS (176 aa)) constitute an MOSC domain.

It belongs to the class-V pyridoxal-phosphate-dependent aminotransferase family. MOCOS subfamily. The cofactor is pyridoxal 5'-phosphate.

The catalysed reaction is Mo-molybdopterin + L-cysteine + AH2 = thio-Mo-molybdopterin + L-alanine + A + H2O. Its pathway is cofactor biosynthesis; molybdopterin biosynthesis. In terms of biological role, sulfurates the molybdenum cofactor. Sulfation of molybdenum is essential for xanthine dehydrogenase (XDH) and aldehyde oxidase (ADO) enzymes in which molybdenum cofactor is liganded by 1 oxygen and 1 sulfur atom in active form. This is Molybdenum cofactor sulfurase from Aspergillus niger (strain ATCC MYA-4892 / CBS 513.88 / FGSC A1513).